Consider the following 162-residue polypeptide: GTP-dependent dephospho-CoA kinase (162 aa).

Residues Asp-40, Val-41, Val-42, Asp-59, Lys-61, and Glu-111 each contribute to the GTP site.

The protein belongs to the GTP-dependent DPCK family.

It carries out the reaction 3'-dephospho-CoA + GTP = GDP + CoA + H(+). It participates in cofactor biosynthesis; coenzyme A biosynthesis. Catalyzes the GTP-dependent phosphorylation of the 3'-hydroxyl group of dephosphocoenzyme A to form coenzyme A (CoA). This is GTP-dependent dephospho-CoA kinase from Sulfurisphaera tokodaii (strain DSM 16993 / JCM 10545 / NBRC 100140 / 7) (Sulfolobus tokodaii).